We begin with the raw amino-acid sequence, 103 residues long: Phosphoribosyl-ATP pyrophosphatase (103 aa).

This sequence belongs to the PRA-PH family.

Its subcellular location is the cytoplasm. The catalysed reaction is 1-(5-phospho-beta-D-ribosyl)-ATP + H2O = 1-(5-phospho-beta-D-ribosyl)-5'-AMP + diphosphate + H(+). The protein operates within amino-acid biosynthesis; L-histidine biosynthesis; L-histidine from 5-phospho-alpha-D-ribose 1-diphosphate: step 2/9. In Cereibacter sphaeroides (strain ATCC 17025 / ATH 2.4.3) (Rhodobacter sphaeroides), this protein is Phosphoribosyl-ATP pyrophosphatase.